The sequence spans 338 residues: tRNA N6-adenosine threonylcarbamoyltransferase (338 aa).

Fe cation contacts are provided by H111 and H115. Substrate is bound by residues 134–138 (LVSGG), D167, G180, and N272. D300 contributes to the Fe cation binding site.

The protein belongs to the KAE1 / TsaD family. The cofactor is Fe(2+).

Its subcellular location is the cytoplasm. The enzyme catalyses L-threonylcarbamoyladenylate + adenosine(37) in tRNA = N(6)-L-threonylcarbamoyladenosine(37) in tRNA + AMP + H(+). Functionally, required for the formation of a threonylcarbamoyl group on adenosine at position 37 (t(6)A37) in tRNAs that read codons beginning with adenine. Is involved in the transfer of the threonylcarbamoyl moiety of threonylcarbamoyl-AMP (TC-AMP) to the N6 group of A37, together with TsaE and TsaB. TsaD likely plays a direct catalytic role in this reaction. The sequence is that of tRNA N6-adenosine threonylcarbamoyltransferase from Aliivibrio fischeri (strain MJ11) (Vibrio fischeri).